We begin with the raw amino-acid sequence, 596 residues long: MNDLIKRKLDILPDQPGCYLMKDRQGTIIYVGKAKVLKNRVRSYFTGTHEGKTQRLVSEIEDFEYIVTSSNIEALILELNLIKLHDPKYNVMLTDDKTYPYLKITNEKHPRLITTRKVKKDKAKYFGPYPNAYAASETKKLLDRLYPLRKCVQLPSKVCLYYHMGQCIAPCVKEIEGHVYQEMIEDMTKFLNGGVEAVKKELEVKMLAAAENLEFERAKEFRDQIAHIDTVMQKQKIVSSDTTNRDVFGYAVEKGWMCVQVFFVRQGKLIERDVSIFPIYQDPEEEFLTFVGRFYEKPEHIKPKEVFIPQAIDGAILTELLGIKVLTPKRGQKKELVDLATKNAEIAVAAKFQLIERQEERTIGACEALGDAMGITTPLRIEAFDNSHMHGTDAVSAMVVFIDGKPAKKEYRKYKTRTAAKHDDYGAMQEVIRRRYIRVLKEGLPLPDLVLIDGGKGQMEVAREVLEDELGLVIPIAGLAKDDKHNTSQLLFGDPPEVIALKRTSDGFYLLQRIQDEVHRFAITFLRQQHEKHAIQSVLDQIEGVGPKRKQQLLKHFGSVKKIREASELALQEAGMPANLASHIYAYFQQESLSKE.

In terms of domain architecture, GIY-YIG spans 14–91 (DQPGCYLMKD…IKLHDPKYNV (78 aa)). Residues 196 to 231 (EAVKKELEVKMLAAAENLEFERAKEFRDQIAHIDTV) enclose the UVR domain.

It belongs to the UvrC family. As to quaternary structure, interacts with UvrB in an incision complex.

It localises to the cytoplasm. Functionally, the UvrABC repair system catalyzes the recognition and processing of DNA lesions. UvrC both incises the 5' and 3' sides of the lesion. The N-terminal half is responsible for the 3' incision and the C-terminal half is responsible for the 5' incision. This Lysinibacillus sphaericus (strain C3-41) protein is UvrABC system protein C.